A 557-amino-acid chain; its full sequence is Urocanate hydratase (557 aa).

The disordered stretch occupies residues 1–20; it reads MSNPRHNEREVRSPRGDELN. NAD(+)-binding positions include 52–53, Q130, 176–178, E196, R201, 242–243, 263–267, 273–274, and Y322; these read GG, GMG, NA, QTSAH, and YL. C410 is an active-site residue. Residue G492 coordinates NAD(+).

The protein belongs to the urocanase family. It depends on NAD(+) as a cofactor.

Its subcellular location is the cytoplasm. The enzyme catalyses 4-imidazolone-5-propanoate = trans-urocanate + H2O. It participates in amino-acid degradation; L-histidine degradation into L-glutamate; N-formimidoyl-L-glutamate from L-histidine: step 2/3. Functionally, catalyzes the conversion of urocanate to 4-imidazolone-5-propionate. This Brucella ovis (strain ATCC 25840 / 63/290 / NCTC 10512) protein is Urocanate hydratase.